A 669-amino-acid chain; its full sequence is Cell surface receptor daf-1 (669 aa).

A signal peptide spans 1–19 (MRIRHVVFCLLALVYGAET). The Extracellular portion of the chain corresponds to 20–170 (SDDDLDERTN…APGPQQSSTW (151 aa)). Residues Asn49, Asn79, Asn133, and Asn154 are each glycosylated (N-linked (GlcNAc...) asparagine). A helical membrane pass occupies residues 171 to 191 (LILTILALLTFIVLLGIAIFL). The Cytoplasmic portion of the chain corresponds to 192–669 (TRKSWEAKFD…NDDSSRPLLG (478 aa)). The GS domain maps to 262 to 292 (NNMKDMLDVLEETSGSGMGPTTLHKLTIGGQ). A Protein kinase domain is found at 293–593 (IRLTGRVGSG…KRMDERQQLL (301 aa)). Residues 299 to 307 (VGSGRFGNV) and Lys320 each bind ATP. The active-site Proton acceptor is the Asp423. 2 stretches are compositionally biased toward basic and acidic residues: residues 611–624 (DRKI…KDES) and 633–650 (VQKE…RETA). A disordered region spans residues 611-669 (DRKILGPQKPKDESPANGAPRIVQKEIDREDEQENWRETAKTPNGHISSNDDSSRPLLG). The span at 651-661 (KTPNGHISSND) shows a compositional bias: polar residues.

It belongs to the protein kinase superfamily. TKL Ser/Thr protein kinase family. TGFB receptor subfamily. May interact with daf-4 to regulate dauer larva development. As to expression, head and ventral nerve cord from embryos to adults. Expressed in many sensory neurons. Subset of head neurons show coexpression with daf-4 when dauer/nondauer decision is made. Also expressed in non-neuronal cells: membraneous sheath surrounding the distal end of the intestine and in the distal tip cell of the gonad.

The protein localises to the membrane. It carries out the reaction L-threonyl-[receptor-protein] + ATP = O-phospho-L-threonyl-[receptor-protein] + ADP + H(+). The enzyme catalyses L-seryl-[receptor-protein] + ATP = O-phospho-L-seryl-[receptor-protein] + ADP + H(+). Its function is as follows. Probably involved in a TGF-beta pathway. May be a receptor for TGF-beta-like ligand daf-7. Controls the decision of whether or not larvae enter a developmentally arrested state, known as dauer, in response to environmental conditions. Involved in regulating entry into quiescence triggered by satiety. Involved in sensitivity to CO2 levels. In AWC neurons, acts to promote expression of srsx-3, a member of the GPCR family. This Caenorhabditis elegans protein is Cell surface receptor daf-1 (daf-1).